The sequence spans 2116 residues: Myosin-2 heavy chain (2116 aa).

Residues 30–82 (SDKRYIWYNPDPKERDSYECGEIVSETSDSFTFKTVDGQDRQVKKDDANQRNP) form the Myosin N-terminal SH3-like domain. Residues 86-759 (DGVEDMSELS…QLARIEEARE (674 aa)) form the Myosin motor domain. An N6,N6-dimethyllysine modification is found at lysine 130. An ATP-binding site is contributed by 179–186 (GESGAGKT). Actin-binding regions lie at residues 638-660 (LASL…IPNN) and 738-752 (RFGI…GQLA). One can recognise an IQ domain in the interval 762–791 (ISEIIKAIQAATRGWIARKVYKQAREHTVA). Residues 817 to 2116 (ARPLLKRRNF…MADFFGGFKA (1300 aa)) adopt a coiled-coil conformation. 6 disordered regions span residues 1295–1314 (VNEQ…KRKV), 1363–1399 (DKSV…SKKK), 1415–1444 (TAKK…DAKN), 1711–1731 (VRDQ…SKRR), 1771–1791 (LEDE…LESE), and 1805–1844 (NRSR…AAKL). Basic and acidic residues-rich tracts occupy residues 1375 to 1399 (KNEE…SKKK), 1415 to 1443 (TAKK…DDAK), and 1722 to 1731 (RSELEDSKRR). Residues 1805–1832 (NRSRAEKDRKKYEKDLKDTKYKLNDEAA) show a composition bias toward basic and acidic residues. 3 positions are modified to phosphothreonine; by MHCK: threonine 1823, threonine 1833, and threonine 2029.

Belongs to the TRAFAC class myosin-kinesin ATPase superfamily. Myosin family. As to quaternary structure, myosin-2 heavy chain is two-headed. It self-assembles into filaments. Hexamer of 2 heavy chain subunits (MHC), 2 alkali light chain subunits (MLC) and 2 regulatory light chain subunits (MLC-2). Associates with elmoA. Phosphorylation inhibits thick filament formation and reduces the actin-activated ATPase activity.

The protein localises to the cytoplasm. The protein resides in the cell cortex. Functionally, myosin is a protein that binds to actin and has ATPase activity that is activated by actin. The protein is Myosin-2 heavy chain (mhcA) of Dictyostelium discoideum (Social amoeba).